The sequence spans 773 residues: Circadian clock protein PASD1 (773 aa).

The PAS domain occupies 30–102 (YDYFNQVTLQ…IILKFPLLNS (73 aa)). A disordered region spans residues 313-361 (SVDQEGPMDQQDPENPVAPLDQAGLMDPVDPEDSVDLGAAGASAQPLQP). A necessary for transcriptional repression region spans residues 365-412 (VAYDIISQELELMKKLKEQLEERTWLLHDAIQNQQNALELMMDHLQKQ). A coiled-coil region spans residues 365–412 (VAYDIISQELELMKKLKEQLEERTWLLHDAIQNQQNALELMMDHLQKQ). Disordered stretches follow at residues 427 to 448 (SEAVPKKQQKQHAGQVKRPLPH), 506 to 569 (QRKV…QLQE), and 732 to 773 (GVEG…NKPC). Residues 475 to 553 (VAFNQQQLVQ…QERKKWQGQM (79 aa)) are a coiled coil. Positions 506-536 (QRKVQKQKKMQEKKKLQEQKMQEKKKLQEQR) are enriched in basic and acidic residues.

In terms of assembly, interacts with the CLOCK-BMAL1 heterodimer; this interaction inhibits CLOCK-BMAL1 transcriptional activation and suppress circadian timekeeping. Interacts with BMAL1. As to expression, testis-specific. Expressed in a broad range of cancer cells, including melanoma, lung cancer, and breast cancer (at protein level). Testis-specific. Found in histologically normal tissues from patients with uterus, lung and small intestine cancers. Widespread expression seen in solid tumors and diffuse large B-cell lymphoma (DLBCL)-derived cell lines. Isoform 2 is expressed in all DLBCL-derived cell lines, while isoform 1 is preferentially expressed in cell lines derived from non-germinal center DLBCL.

It localises to the nucleus. Functionally, functions as a suppressor of the biological clock that drives the daily circadian rhythms of cells throughout the body. Acts as a nuclear repressor of the CLOCK-BMAL1 heterodimer-mediated transcriptional activation of the core clock components. Inhibits circadian clock function in cancer cells, when overexpressed. In Homo sapiens (Human), this protein is Circadian clock protein PASD1.